The chain runs to 379 residues: Hydrogenase expression/formation protein HupD (379 aa).

Cysteine 36, cysteine 64, and cysteine 67 together coordinate Fe cation.

It belongs to the HypD family.

In Azotobacter chroococcum mcd 1, this protein is Hydrogenase expression/formation protein HupD (hupD).